Reading from the N-terminus, the 347-residue chain is 4-hydroxy-2-oxovalerate aldolase 4 (347 aa).

The Pyruvate carboxyltransferase domain maps to 9 to 259; that stretch reads ITIVDTTLRD…DTGVDLFPLI (251 aa). Residues 17–18, Ser171, and His198 contribute to the substrate site; that span reads RD. A Mn(2+)-binding site is contributed by Asp18. Positions 198 and 200 each coordinate Mn(2+). Residue Tyr289 coordinates substrate.

This sequence belongs to the 4-hydroxy-2-oxovalerate aldolase family.

The catalysed reaction is (S)-4-hydroxy-2-oxopentanoate = acetaldehyde + pyruvate. This is 4-hydroxy-2-oxovalerate aldolase 4 from Rhodococcus opacus (strain B4).